The following is a 366-amino-acid chain: Aminomethyltransferase (366 aa).

Belongs to the GcvT family. As to quaternary structure, the glycine cleavage system is composed of four proteins: P, T, L and H.

It catalyses the reaction N(6)-[(R)-S(8)-aminomethyldihydrolipoyl]-L-lysyl-[protein] + (6S)-5,6,7,8-tetrahydrofolate = N(6)-[(R)-dihydrolipoyl]-L-lysyl-[protein] + (6R)-5,10-methylene-5,6,7,8-tetrahydrofolate + NH4(+). Its function is as follows. The glycine cleavage system catalyzes the degradation of glycine. The polypeptide is Aminomethyltransferase (Bacillus cereus (strain G9842)).